A 325-amino-acid polypeptide reads, in one-letter code: Glutarate 2-hydroxylase (325 aa).

Fe cation-binding residues include histidine 160, aspartate 162, and histidine 292.

Belongs to the glutarate hydroxylase family. In terms of assembly, homotetramer. It depends on Fe(2+) as a cofactor.

The catalysed reaction is glutarate + 2-oxoglutarate + O2 = (S)-2-hydroxyglutarate + succinate + CO2. Its pathway is amino-acid degradation. Functionally, acts as an alpha-ketoglutarate-dependent dioxygenase catalyzing hydroxylation of glutarate (GA) to L-2-hydroxyglutarate (L2HG). Functions in a L-lysine degradation pathway that proceeds via cadaverine, glutarate and L-2-hydroxyglutarate. This is Glutarate 2-hydroxylase from Escherichia coli O157:H7.